Consider the following 684-residue polypeptide: Histone-lysine N-methyltransferase SETMAR (684 aa).

The interval 1–345 (MFAEAAKTTR…RLTLETMKMM (345 aa)) is histone-lysine N-methyltransferase. Residues 73–136 (PGCICVKTPC…HCRNRVVQKG (64 aa)) form the Pre-SET domain. 9 residues coordinate Zn(2+): C75, C77, C82, C87, C89, C118, C122, C124, and C128. An SET domain is found at 139 to 263 (FHFQVFKTHK…PEEELSYDYS (125 aa)). S-adenosyl-L-methionine is bound by residues 149-151 (KGW), Y192, R220, and 223-224 (NH). Residues C226, C287, C289, and C294 each coordinate Zn(2+). The 17-residue stretch at 283-299 (LRKPCYCGAKSCTAFLP) folds into the Post-SET domain. The mariner transposase Hsmar1 stretch occupies residues 346-684 (LDKKQIRAIF…CVDCNGSYFD (339 aa)). DNA-binding regions (H-T-H motif) lie at residues 364 to 395 (KAAETTRNINNAFGPGTANERTVQWWFKKFCK) and 428 to 448 (TTREVAEELNVNHSTVVRHLK). Residue D496 coordinates Mg(2+). At K498 the chain carries N6-methyllysine. S508 is modified (phosphoserine; by CHEK1). D588 is a Mg(2+) binding site.

It in the N-terminal section; belongs to the class V-like SAM-binding methyltransferase superfamily. This sequence in the C-terminal section; belongs to the mariner transposase family. In terms of assembly, homodimer. Interacts with PRPF19; required for SETMAR recruitment to damaged DNA sites. Interacts with PCNA. Interacts with TOP2A; stimulates TOP2A topoisomerase activity. May interact with RAD9A and/or RAD9B. Mg(2+) serves as cofactor. Post-translationally, methylated. Methylation regulates activity in DNA decatenation. In terms of processing, phosphorylated at Ser-508 by CHEK1 and dephosphorylated by protein phosphatase 2A/PP2A. Phosphorylation at Ser-508 is enhanced by DNA damage and promotes recruitment to damaged DNA. It stimulates DNA repair and impairs replication fork restart. In terms of tissue distribution, widely expressed, with highest expression in placenta and ovary and lowest expression in skeletal muscle.

It is found in the nucleus. The protein resides in the chromosome. The enzyme catalyses L-lysyl(36)-[histone H3] + 2 S-adenosyl-L-methionine = N(6),N(6)-dimethyl-L-lysyl(36)-[histone H3] + 2 S-adenosyl-L-homocysteine + 2 H(+). Its function is as follows. Protein derived from the fusion of a methylase with the transposase of an Hsmar1 transposon that plays a role in DNA double-strand break repair, stalled replication fork restart and DNA integration. DNA-binding protein, it is indirectly recruited to sites of DNA damage through protein-protein interactions. Also has kept a sequence-specific DNA-binding activity recognizing the 19-mer core of the 5'-terminal inverted repeats (TIRs) of the Hsmar1 element and displays a DNA nicking and end joining activity. In parallel, has a histone methyltransferase activity and methylates 'Lys-4' and 'Lys-36' of histone H3. Specifically mediates dimethylation of H3 'Lys-36' at sites of DNA double-strand break and may recruit proteins required for efficient DSB repair through non-homologous end-joining. Also regulates replication fork processing, promoting replication fork restart and regulating DNA decatenation through stimulation of the topoisomerase activity of TOP2A. This is Histone-lysine N-methyltransferase SETMAR from Homo sapiens (Human).